Here is a 505-residue protein sequence, read N- to C-terminus: Lysine--tRNA ligase (505 aa).

Mg(2+)-binding residues include Glu415 and Glu422.

This sequence belongs to the class-II aminoacyl-tRNA synthetase family. In terms of assembly, homodimer. Mg(2+) serves as cofactor.

It is found in the cytoplasm. It carries out the reaction tRNA(Lys) + L-lysine + ATP = L-lysyl-tRNA(Lys) + AMP + diphosphate. The protein is Lysine--tRNA ligase of Pectobacterium atrosepticum (strain SCRI 1043 / ATCC BAA-672) (Erwinia carotovora subsp. atroseptica).